A 413-amino-acid chain; its full sequence is Histidine--tRNA ligase (413 aa).

It belongs to the class-II aminoacyl-tRNA synthetase family. In terms of assembly, homodimer.

The protein resides in the cytoplasm. It carries out the reaction tRNA(His) + L-histidine + ATP = L-histidyl-tRNA(His) + AMP + diphosphate + H(+). This chain is Histidine--tRNA ligase (hisS), found in Rickettsia prowazekii (strain Madrid E).